We begin with the raw amino-acid sequence, 345 residues long: Phosphate import ATP-binding protein PstB 2 (345 aa).

The interval 1–57 (MSDTPQSEPRRSDDRSGADDATAAAAGSTDAAAAAVSSKTGGIAGPPGGPGEVDGDE) is disordered. Residues 8–18 (EPRRSDDRSGA) are compositionally biased toward basic and acidic residues. A compositionally biased stretch (low complexity) spans 19-35 (DDATAAAAGSTDAAAAA). Positions 42-52 (GIAGPPGGPGE) are enriched in gly residues. The 255-residue stretch at 86–340 (VSVSDLDTYY…PQSQRVEDYV (255 aa)) folds into the ABC transporter domain. Residue 118–125 (GPSGCGKS) participates in ATP binding.

This sequence belongs to the ABC transporter superfamily. Phosphate importer (TC 3.A.1.7) family. In terms of assembly, the complex is composed of two ATP-binding proteins (PstB), two transmembrane proteins (PstC and PstA) and a solute-binding protein (PstS).

The protein localises to the cell membrane. It carries out the reaction phosphate(out) + ATP + H2O = ADP + 2 phosphate(in) + H(+). Functionally, part of the ABC transporter complex PstSACB involved in phosphate import. Responsible for energy coupling to the transport system. The polypeptide is Phosphate import ATP-binding protein PstB 2 (Halobacterium salinarum (strain ATCC 700922 / JCM 11081 / NRC-1) (Halobacterium halobium)).